The sequence spans 300 residues: Hemagglutinin 1 (300 aa).

The helical transmembrane segment at 200 to 221 (FIFATVVFIFLQAGRVPEIIAD) threads the bilayer.

It is found in the cell membrane. Functionally, induces agglutination of neuraminidase-treated erythrocytes. This Eikenella corrodens protein is Hemagglutinin 1 (hag1).